We begin with the raw amino-acid sequence, 113 residues long: Carboxysome shell protein CcmK1 (113 aa).

In terms of domain architecture, BMC spans 4–90 (AVGMIETLGF…PHENLEYVLP (87 aa)).

The protein belongs to the bacterial microcompartments protein family. CcmK subfamily. As to quaternary structure, homohexamer. Interacts preferentially with CcmK2 and CcmK4a rather than itself in vitro.

It localises to the carboxysome. One of the shell proteins of the carboxysome, a polyhedral inclusion where RuBisCO (ribulose bisphosphate carboxylase, rbcL-rbcS) is sequestered. Assembles into hexamers which make sheets that form the facets of the polyhedral carboxysome. The hexamer central pore probably regulates metabolite flux. The protein is Carboxysome shell protein CcmK1 of Thermosynechococcus vestitus (strain NIES-2133 / IAM M-273 / BP-1).